We begin with the raw amino-acid sequence, 236 residues long: Sorulation-regulated protein 2 (236 aa).

The N-terminal stretch at 1-20 is a signal peptide; it reads MLGLYLSSLFFAFFMAQVFA. N-linked (GlcNAc...) asparagine glycans are attached at residues Asn155, Asn160, Asn203, and Asn212. A lipid anchor (GPI-anchor amidated asparagine) is attached at Asn212. A propeptide spans 213-236 (removed in mature form); sequence SSSSLMPSMGILSFLFGLYLLLHP.

In terms of processing, the GPI-anchor is attached to the protein in the endoplasmic reticulum and serves to target the protein to the cell surface. There, the glucosamine-inositol phospholipid moiety is cleaved off and the GPI-modified mannoprotein is covalently attached via its lipidless GPI glycan remnant to the 1,6-beta-glucan of the outer cell wall layer. Post-translationally, N-glycosylated.

The protein resides in the spore wall. It localises to the secreted. It is found in the cell wall. Its subcellular location is the membrane. The sequence is that of Sorulation-regulated protein 2 from Saccharomyces cerevisiae (strain ATCC 204508 / S288c) (Baker's yeast).